The following is a 183-amino-acid chain: ATP-dependent protease subunit HslV (183 aa).

The active site involves threonine 2. Alanine 157, cysteine 160, and threonine 163 together coordinate Na(+).

It belongs to the peptidase T1B family. HslV subfamily. As to quaternary structure, a double ring-shaped homohexamer of HslV is capped on each side by a ring-shaped HslU homohexamer. The assembly of the HslU/HslV complex is dependent on binding of ATP.

The protein resides in the cytoplasm. The catalysed reaction is ATP-dependent cleavage of peptide bonds with broad specificity.. Allosterically activated by HslU binding. Its function is as follows. Protease subunit of a proteasome-like degradation complex believed to be a general protein degrading machinery. This chain is ATP-dependent protease subunit HslV, found in Marinomonas sp. (strain MWYL1).